The primary structure comprises 383 residues: Succinyl-diaminopimelate desuccinylase (383 aa).

Histidine 79 contacts Zn(2+). Residue aspartate 81 is part of the active site. Residue aspartate 110 participates in Zn(2+) binding. The active-site Proton acceptor is glutamate 141. Zn(2+) contacts are provided by glutamate 142, glutamate 170, and histidine 355.

The protein belongs to the peptidase M20A family. DapE subfamily. In terms of assembly, homodimer. Zn(2+) serves as cofactor. The cofactor is Co(2+).

The enzyme catalyses N-succinyl-(2S,6S)-2,6-diaminopimelate + H2O = (2S,6S)-2,6-diaminopimelate + succinate. Its pathway is amino-acid biosynthesis; L-lysine biosynthesis via DAP pathway; LL-2,6-diaminopimelate from (S)-tetrahydrodipicolinate (succinylase route): step 3/3. Catalyzes the hydrolysis of N-succinyl-L,L-diaminopimelic acid (SDAP), forming succinate and LL-2,6-diaminopimelate (DAP), an intermediate involved in the bacterial biosynthesis of lysine and meso-diaminopimelic acid, an essential component of bacterial cell walls. In Helicobacter pylori (strain P12), this protein is Succinyl-diaminopimelate desuccinylase.